We begin with the raw amino-acid sequence, 143 residues long: Glutamate-rich protein 4 (143 aa).

Residues 90-106 show a composition bias toward acidic residues; that stretch reads LEEEEEDDDEEEQEEEG. The segment at 90–143 is disordered; that stretch reads LEEEEEDDDEEEQEEEGEGKNCVEENKGLQGKQGEKCSGNPYPAQRLPDFEMTI. Over residues 107-116 the composition is skewed to basic and acidic residues; sequence EGKNCVEENK.

In Rattus norvegicus (Rat), this protein is Glutamate-rich protein 4 (Erich4).